A 683-amino-acid chain; its full sequence is Cytochrome P450 monooxygenase htyF (683 aa).

The chain crosses the membrane as a helical span at residues 8–28; the sequence is PALLAASVVLAVSLVSYVIQL. Residue Asn29 is glycosylated (N-linked (GlcNAc...) asparagine). Cys481 is a heme binding site. Residue Asn581 is glycosylated (N-linked (GlcNAc...) asparagine). The chain crosses the membrane as a helical span at residues 588 to 608; sequence LYVFVVLVACVAALFIGIGIY.

It belongs to the cytochrome P450 family. The cofactor is heme.

It localises to the membrane. It participates in antifungal biosynthesis. Its function is as follows. Cytochrome P450 monooxygenase; part of the gene cluster that mediates the de novo generation of L-homotyrosine from acetyl-CoA and 4-hydroxyphenyl-pyruvate. L-homotyrosine is a building block of echinocandin B, a fungal lipidated cyclic hexapeptide that acts as an antifungal agent. L-homotyrosine 4-hydroxyphenyl-pyruvate first undergoes an aldol-type condensation by htyA with the C-2 of acetyl-CoA followed by the release of CoA to form 2-(4-hydroxybenzyl)-malate. This is followed by isomerization of 2-(4-hydroxy-benzyl)-malate to 3-(4-hydroxybenzyl)-malate by htyD. Thereafter, 3-(4-hydroxybenzyl)-malate undergoes decarboxylation and oxidation to form 2-oxo-4-(4-hydroxybenzyl)butanoic acid, coupled to reduction of NAD(+) to NADH by htyC. The product then undergoes transamination catalyzed by htyB to form L-homotyrosine. This chain is Cytochrome P450 monooxygenase htyF, found in Aspergillus rugulosus (Emericella rugulosa).